The chain runs to 719 residues: DNA ligase (719 aa).

NAD(+)-binding positions include 42–46 (DAEYD), 91–92 (SL), and Glu-125. The active-site N6-AMP-lysine intermediate is the Lys-127. Residues Arg-148, Glu-184, Lys-300, and Lys-324 each coordinate NAD(+). 4 residues coordinate Zn(2+): Cys-429, Cys-432, Cys-447, and Cys-453. The BRCT domain maps to 638-719 (TASSPIAEKI…WMRLIKGHNI (82 aa)).

This sequence belongs to the NAD-dependent DNA ligase family. LigA subfamily. Requires Mg(2+) as cofactor. The cofactor is Mn(2+).

It carries out the reaction NAD(+) + (deoxyribonucleotide)n-3'-hydroxyl + 5'-phospho-(deoxyribonucleotide)m = (deoxyribonucleotide)n+m + AMP + beta-nicotinamide D-nucleotide.. Functionally, DNA ligase that catalyzes the formation of phosphodiester linkages between 5'-phosphoryl and 3'-hydroxyl groups in double-stranded DNA using NAD as a coenzyme and as the energy source for the reaction. It is essential for DNA replication and repair of damaged DNA. The protein is DNA ligase of Bartonella tribocorum (strain CIP 105476 / IBS 506).